A 168-amino-acid polypeptide reads, in one-letter code: Peptidyl-Lys metalloendopeptidase (168 aa).

2 disulfide bridges follow: C6/C76 and C78/C98. A Zn(2+)-binding site is contributed by H118. E119 is a catalytic residue. H122 and D131 together coordinate Zn(2+).

The cofactor is Zn(2+).

It is found in the secreted. It carries out the reaction Preferential cleavage in proteins: -Xaa-|-Lys- (in which Xaa may be Pro).. Inhibited by chelating agents such as EDTA and 1,10-phenanthroline. The sequence is that of Peptidyl-Lys metalloendopeptidase (MEP) from Pleurotus ostreatus (Oyster mushroom).